A 248-amino-acid polypeptide reads, in one-letter code: 2,3-bisphosphoglycerate-dependent phosphoglycerate mutase (248 aa).

Substrate contacts are provided by residues R8–N15, T21–G22, R60, E87–Y90, K98, and R114–R115. The Tele-phosphohistidine intermediate role is filled by H9. E87 functions as the Proton donor/acceptor in the catalytic mechanism. The tract at residues D118–R137 is disordered. Residues T127–R137 are compositionally biased toward basic and acidic residues. G183 to N184 serves as a coordination point for substrate.

It belongs to the phosphoglycerate mutase family. BPG-dependent PGAM subfamily. As to quaternary structure, homodimer.

It carries out the reaction (2R)-2-phosphoglycerate = (2R)-3-phosphoglycerate. It functions in the pathway carbohydrate degradation; glycolysis; pyruvate from D-glyceraldehyde 3-phosphate: step 3/5. Its function is as follows. Catalyzes the interconversion of 2-phosphoglycerate and 3-phosphoglycerate. The protein is 2,3-bisphosphoglycerate-dependent phosphoglycerate mutase of Cupriavidus necator (strain ATCC 17699 / DSM 428 / KCTC 22496 / NCIMB 10442 / H16 / Stanier 337) (Ralstonia eutropha).